The chain runs to 197 residues: Transcription factor FapR (197 aa).

Belongs to the FapR family.

In terms of biological role, transcriptional factor involved in regulation of membrane lipid biosynthesis by repressing genes involved in fatty acid and phospholipid metabolism. The sequence is that of Transcription factor FapR from Bacillus anthracis (strain A0248).